The following is a 473-amino-acid chain: Ras-GEF domain-containing family member 1B (473 aa).

One can recognise an N-terminal Ras-GEF domain in the interval 34–164 (HDNNLLSGSL…QMMQCLIRKL (131 aa)). The Ras-GEF domain occupies 204 to 452 (NDPYTLAQQL…LYLASYESEG (249 aa)).

Interacts with Ras family proteins. Interacts with CCDC124 during cytokinesis.

The protein localises to the early endosome. It is found in the late endosome. Its subcellular location is the midbody. In terms of biological role, guanine nucleotide exchange factor (GEF) with specificity for RAP2A, it doesn't seems to activate other Ras family proteins (in vitro). The polypeptide is Ras-GEF domain-containing family member 1B (RASGEF1B) (Homo sapiens (Human)).